A 450-amino-acid chain; its full sequence is Phosphoglucosamine mutase (450 aa).

The active-site Phosphoserine intermediate is the S101. Positions 101, 240, 242, and 244 each coordinate Mg(2+). S101 is subject to Phosphoserine.

The protein belongs to the phosphohexose mutase family. Mg(2+) is required as a cofactor. Activated by phosphorylation.

It catalyses the reaction alpha-D-glucosamine 1-phosphate = D-glucosamine 6-phosphate. In terms of biological role, catalyzes the conversion of glucosamine-6-phosphate to glucosamine-1-phosphate. This is Phosphoglucosamine mutase from Streptococcus pneumoniae serotype 4 (strain ATCC BAA-334 / TIGR4).